Here is a 603-residue protein sequence, read N- to C-terminus: Glutamyl-tRNA(Gln) amidotransferase subunit E (603 aa).

Belongs to the GatB/GatE family. GatE subfamily. In terms of assembly, heterodimer of GatD and GatE.

The catalysed reaction is L-glutamyl-tRNA(Gln) + L-glutamine + ATP + H2O = L-glutaminyl-tRNA(Gln) + L-glutamate + ADP + phosphate + H(+). In terms of biological role, allows the formation of correctly charged Gln-tRNA(Gln) through the transamidation of misacylated Glu-tRNA(Gln) in organisms which lack glutaminyl-tRNA synthetase. The reaction takes place in the presence of glutamine and ATP through an activated gamma-phospho-Glu-tRNA(Gln). The GatDE system is specific for glutamate and does not act on aspartate. This chain is Glutamyl-tRNA(Gln) amidotransferase subunit E, found in Thermoplasma acidophilum (strain ATCC 25905 / DSM 1728 / JCM 9062 / NBRC 15155 / AMRC-C165).